Reading from the N-terminus, the 198-residue chain is Carnitine operon protein CaiE (198 aa).

The segment at 179–198 (VEENRPRLKGTTDVKPKSAQ) is disordered. Residues 180-198 (EENRPRLKGTTDVKPKSAQ) show a composition bias toward basic and acidic residues.

Belongs to the transferase hexapeptide repeat family.

The protein operates within amine and polyamine metabolism; carnitine metabolism. Its function is as follows. Overproduction of CaiE stimulates the activity of CaiB and CaiD. This Salmonella enteritidis PT4 (strain P125109) protein is Carnitine operon protein CaiE.